Consider the following 216-residue polypeptide: Hydrogenase-4 component E (216 aa).

The Periplasmic segment spans residues 1–3 (MTG). Residues 4-24 (SMIVNNLAGLMMLTSLFVISV) traverse the membrane as a helical segment. The Cytoplasmic segment spans residues 25–38 (KSYRLSCGFYACQS). Helical transmembrane passes span 39 to 59 (LVLV…QLLI) and 60 to 80 (WSAS…TYAA). The Cytoplasmic portion of the chain corresponds to 81-92 (RNIPQNIPEKAL). The chain crosses the membrane as a helical span at residues 93-113 (FGPAMMALLAALIVLLCAFVV). Over 114–122 (QPVKLPMAT) the chain is Periplasmic. Residues 123-143 (GLKPALAVALGHFLLGLLCIV) form a helical membrane-spanning segment. Residues 144–150 (SQRNILR) lie on the Cytoplasmic side of the membrane. Residues 151-171 (QIFGYCLMENGSHLVLALLAW) traverse the membrane as a helical segment. Residues 172-175 (RAPE) are Periplasmic-facing. A helical membrane pass occupies residues 176–196 (LVEIGIATDAIFAVIVMVLLA). The Cytoplasmic portion of the chain corresponds to 197 to 216 (RKIWRTHGTLDVNNLTALKG).

It is found in the cell inner membrane. The sequence is that of Hydrogenase-4 component E (hyfE) from Escherichia coli O157:H7.